Reading from the N-terminus, the 312-residue chain is Putative HTH-type transcriptional regulatory protein TV0294 (312 aa).

Residues 133–186 (LRERRNELNLSIGNISSYLGVSRRSVSLYENGSAATIDIFIRLRNILKADIVDH) enclose the HTH cro/C1-type domain. A DNA-binding region (H-T-H motif) is located at residues 144-163 (IGNISSYLGVSRRSVSLYEN).

The chain is Putative HTH-type transcriptional regulatory protein TV0294 from Thermoplasma volcanium (strain ATCC 51530 / DSM 4299 / JCM 9571 / NBRC 15438 / GSS1).